We begin with the raw amino-acid sequence, 301 residues long: GTP cyclohydrolase FolE2 (301 aa).

It belongs to the GTP cyclohydrolase IV family.

The enzyme catalyses GTP + H2O = 7,8-dihydroneopterin 3'-triphosphate + formate + H(+). It participates in cofactor biosynthesis; 7,8-dihydroneopterin triphosphate biosynthesis; 7,8-dihydroneopterin triphosphate from GTP: step 1/1. Its function is as follows. Converts GTP to 7,8-dihydroneopterin triphosphate. In Pseudomonas putida (strain GB-1), this protein is GTP cyclohydrolase FolE2.